A 748-amino-acid polypeptide reads, in one-letter code: Photosystem I P700 chlorophyll a apoprotein A1 (748 aa).

8 helical membrane passes run 70-93 (VFSA…FHGA), 156-179 (LYTT…FHYH), 195-219 (LNHH…HVSM), 291-309 (TAHH…GHMY), 346-369 (WHAQ…HHMY), 385-411 (LSLF…IFMV), 433-455 (AIIS…LYIH), and 530-548 (FLVH…LILL). [4Fe-4S] cluster-binding residues include cysteine 572 and cysteine 581. Transmembrane regions (helical) follow at residues 588–609 (HIFL…HFSW) and 662–684 (LSAY…MFLF). Residue histidine 673 coordinates chlorophyll a'. Chlorophyll a is bound by residues methionine 681 and tyrosine 689. Tryptophan 690 contributes to the phylloquinone binding site. The helical transmembrane segment at 722–742 (AVGVAHYLLGGIATTWAFFLA) threads the bilayer.

It belongs to the PsaA/PsaB family. In terms of assembly, the PsaA/B heterodimer binds the P700 chlorophyll special pair and subsequent electron acceptors. PSI consists of a core antenna complex that captures photons, and an electron transfer chain that converts photonic excitation into a charge separation. The eukaryotic PSI reaction center is composed of at least 11 subunits. P700 is a chlorophyll a/chlorophyll a' dimer, A0 is one or more chlorophyll a, A1 is one or both phylloquinones and FX is a shared 4Fe-4S iron-sulfur center. is required as a cofactor.

The protein resides in the plastid. It localises to the chloroplast thylakoid membrane. The enzyme catalyses reduced [plastocyanin] + hnu + oxidized [2Fe-2S]-[ferredoxin] = oxidized [plastocyanin] + reduced [2Fe-2S]-[ferredoxin]. Functionally, psaA and PsaB bind P700, the primary electron donor of photosystem I (PSI), as well as the electron acceptors A0, A1 and FX. PSI is a plastocyanin-ferredoxin oxidoreductase, converting photonic excitation into a charge separation, which transfers an electron from the donor P700 chlorophyll pair to the spectroscopically characterized acceptors A0, A1, FX, FA and FB in turn. Oxidized P700 is reduced on the lumenal side of the thylakoid membrane by plastocyanin. The protein is Photosystem I P700 chlorophyll a apoprotein A1 of Chara vulgaris (Common stonewort).